We begin with the raw amino-acid sequence, 240 residues long: Peptidyl-tRNA hydrolase 2 (240 aa).

Residue tyrosine 60 participates in tRNA binding. Histidine 65 functions as the Proton acceptor in the catalytic mechanism. TRNA contacts are provided by tyrosine 111, asparagine 113, and asparagine 159.

Belongs to the PTH family. Monomer.

It is found in the cytoplasm. It catalyses the reaction an N-acyl-L-alpha-aminoacyl-tRNA + H2O = an N-acyl-L-amino acid + a tRNA + H(+). In terms of biological role, hydrolyzes ribosome-free peptidyl-tRNAs (with 1 or more amino acids incorporated), which drop off the ribosome during protein synthesis, or as a result of ribosome stalling. Its function is as follows. Catalyzes the release of premature peptidyl moieties from peptidyl-tRNA molecules trapped in stalled 50S ribosomal subunits, and thus maintains levels of free tRNAs and 50S ribosomes. This Corynebacterium jeikeium (strain K411) protein is Peptidyl-tRNA hydrolase 2.